Reading from the N-terminus, the 116-residue chain is Toxin CSTX-10 (116 aa).

The first 20 residues, 1–20 (MKVLVIFAVLSLVIFSNCSA), serve as a signal peptide directing secretion. A propeptide spanning residues 21–47 (ETDEDFFGEESFEADDIIPFIAKEQVR) is cleaved from the precursor. Cystine bridges form between Cys53–Cys68, Cys60–Cys77, Cys67–Cys94, and Cys79–Cys92.

As to expression, expressed by the venom gland.

It localises to the secreted. It is found in the target cell membrane. Functionally, spider venom toxin that shows calcium channel blocking activity and exhibits cytolytic activity by affecting the outer leaflet curvature and/or pore formation across the membrane. It blocks L-type calcium channels (Cav1/CACNA1) in mammalian neurons at nanomolar concentrations. Furthermore, it produces a slow voltage-independent block of mid/low and high voltage-activated calcium channels in cockroach neurons. Potassium ions, histamine, M-ctenitoxin-Cs1a (AC P83619), CSTX-9 (AC P58604), and CSTX-13 (AC P83919) synergistically increase the insecticidal activity of this toxin. In vivo, it causes paralysis in blow flies and provokes death in drosophila. This is Toxin CSTX-10 from Cupiennius salei (American wandering spider).